The following is a 370-amino-acid chain: Phospho-2-dehydro-3-deoxyheptonate aldolase, tyrosine-inhibited (370 aa).

It belongs to the class-I DAHP synthase family.

It catalyses the reaction D-erythrose 4-phosphate + phosphoenolpyruvate + H2O = 7-phospho-2-dehydro-3-deoxy-D-arabino-heptonate + phosphate. It functions in the pathway metabolic intermediate biosynthesis; chorismate biosynthesis; chorismate from D-erythrose 4-phosphate and phosphoenolpyruvate: step 1/7. Its activity is regulated as follows. Inhibited by tyrosine. Stereospecific condensation of phosphoenolpyruvate (PEP) and D-erythrose-4-phosphate (E4P) giving rise to 3-deoxy-D-arabino-heptulosonate-7-phosphate (DAHP). This is Phospho-2-dehydro-3-deoxyheptonate aldolase, tyrosine-inhibited (ARO4) from Candida albicans (strain SC5314 / ATCC MYA-2876) (Yeast).